Consider the following 160-residue polypeptide: Myosin regulatory light chain, smooth muscle (160 aa).

Blocked amino end (Ser) is present on Ser1. Ser11 carries the post-translational modification Phosphoserine. EF-hand domains are found at residues 20-55 and 88-123; these read NQIQEMKEAFTMIDQNRDGLIDVSDLKEMYSNLGTA and DPEETLRNAFQMFDSDNTGYIPEEYMKDLLENMGDN. Residues Asp33, Asn35, Asp37, and Asp44 each contribute to the Ca(2+) site.

In terms of biological role, in molluscan muscle, calcium regulation is associated with myosin rather than with actin. Muscle myosin contains two types of light chains: the catalytic light chain, essential for ATPase activity, and the regulatory light chain, a calcium-binding protein responsible for Ca(2+) dependent binding and Ca(2+) dependent Mg-ATPase activity. The chain is Myosin regulatory light chain, smooth muscle from Spisula sachalinensis (Sakhalin surf-clam).